The primary structure comprises 71 residues: MSGMGVLLLVLLLVMPLAAFHQDGEGEATRRSGGLKRDCPTSCPTTCANGWECCKGYPCVRQHCSGCNHGK.

Residues 1 to 19 (MSGMGVLLLVLLLVMPLAA) form the signal peptide. The propeptide occupies 20–35 (FHQDGEGEATRRSGGL). Residues proline 40 and proline 44 each carry the 4-hydroxyproline modification. Tryptophan 51 is subject to 6'-bromotryptophan. Glutamate 52 carries the post-translational modification 4-carboxyglutamate. At lysine 55 the chain carries 5-hydroxylysine. Proline 58 carries the 4-hydroxyproline modification. Histidine 69 bears the Histidine amide mark.

The protein belongs to the conotoxin G superfamily. In terms of processing, contains 4 disulfide bonds. As to expression, expressed by the venom duct.

It localises to the secreted. The chain is Conotoxin De13.1 from Conasprella delessertii (Sozon's cone).